A 142-amino-acid polypeptide reads, in one-letter code: Large ribosomal subunit protein uL13 (142 aa).

The protein belongs to the universal ribosomal protein uL13 family. As to quaternary structure, part of the 50S ribosomal subunit.

Functionally, this protein is one of the early assembly proteins of the 50S ribosomal subunit, although it is not seen to bind rRNA by itself. It is important during the early stages of 50S assembly. This chain is Large ribosomal subunit protein uL13, found in Shigella sonnei (strain Ss046).